A 147-amino-acid polypeptide reads, in one-letter code: Small ribosomal subunit protein uS12 (147 aa).

Belongs to the universal ribosomal protein uS12 family. Part of the 30S ribosomal subunit.

With S4 and S5 plays an important role in translational accuracy. Located at the interface of the 30S and 50S subunits. This is Small ribosomal subunit protein uS12 from Pyrococcus horikoshii (strain ATCC 700860 / DSM 12428 / JCM 9974 / NBRC 100139 / OT-3).